Consider the following 345-residue polypeptide: S-adenosylmethionine:tRNA ribosyltransferase-isomerase (345 aa).

Belongs to the QueA family. As to quaternary structure, monomer.

It is found in the cytoplasm. The catalysed reaction is 7-aminomethyl-7-carbaguanosine(34) in tRNA + S-adenosyl-L-methionine = epoxyqueuosine(34) in tRNA + adenine + L-methionine + 2 H(+). It participates in tRNA modification; tRNA-queuosine biosynthesis. Its function is as follows. Transfers and isomerizes the ribose moiety from AdoMet to the 7-aminomethyl group of 7-deazaguanine (preQ1-tRNA) to give epoxyqueuosine (oQ-tRNA). This is S-adenosylmethionine:tRNA ribosyltransferase-isomerase from Shewanella sp. (strain W3-18-1).